The sequence spans 235 residues: Uridylate kinase (235 aa).

ATP is bound at residue 12-15 (KISG). A UMP-binding site is contributed by Gly54. Residues Gly55 and Arg59 each contribute to the ATP site. UMP is bound by residues Asp72 and 133–140 (TGNPFFST). 2 residues coordinate ATP: Tyr166 and Asp169.

It belongs to the UMP kinase family. Homohexamer.

It is found in the cytoplasm. It carries out the reaction UMP + ATP = UDP + ADP. It participates in pyrimidine metabolism; CTP biosynthesis via de novo pathway; UDP from UMP (UMPK route): step 1/1. Inhibited by UTP. In terms of biological role, catalyzes the reversible phosphorylation of UMP to UDP. This Acetivibrio thermocellus (strain ATCC 27405 / DSM 1237 / JCM 9322 / NBRC 103400 / NCIMB 10682 / NRRL B-4536 / VPI 7372) (Clostridium thermocellum) protein is Uridylate kinase.